A 616-amino-acid polypeptide reads, in one-letter code: FAD-linked oxidoreductase cheF (616 aa).

An FAD-binding PCMH-type domain is found at 160 to 344 (NQGLVSPWYV…LSMTVRVEPA (185 aa)).

It belongs to the oxygen-dependent FAD-linked oxidoreductase family. FAD is required as a cofactor.

It functions in the pathway secondary metabolite biosynthesis. In terms of biological role, FAD-linked oxidoreductase; part of the gene cluster that mediates the biosynthesis of chaetoglobosin A which has a unique inhibitory activity against actin polymerization in mammalian cells. Chaetoglobosin A and its intermediates are involved in the morphological differentiation of C.globosum. The first step of the pathway is the synthesis of prochaetoglobosin I via condensation of one acetyl-CoA, 8 malonyl-CoA, and a L-tryptophan molecule by the PKS-NRPS hybrid synthetase cheA, followed by reduction of backbone double bond to install desired geometry by the enoyl reductase cheB. Further multiple oxidation steps performed by the cytochrome P450 monooxygenases cheE and cheG, as well as by the FAD-linked oxidoreductase cheF, lead to the formation of chaetoglobosin A. Depending on the order of action of these reductases, distinct intermediates can be identified. Within the pathway, the cytochrome P450 monooxygenase cheE catalyzes a stereospecific epoxidation on prochaetoglobosin I, cytoglobosin D, and chaetoglobosin J intermediates. The FAD-linked oxidoreductase cheF performs dehydrogenation of the C-20 hydroxyl groups in the 20-dihyrochaetoglobosin A and cytoglobosin D intermediates. Finally, the cytochrome P450 monooxygenase cheG can catalyze the stereospecific dihydroxylation of prochaetoglobosin I and prochaetoglobosin IV at C-19 and C-20, respectively. The Diels-Alderase cheD may play a role in the post-PKS-NRPS biosynthetic steps catalyzing Diels-Alder cyclization. The protein is FAD-linked oxidoreductase cheF of Chaetomium globosum (strain ATCC 6205 / CBS 148.51 / DSM 1962 / NBRC 6347 / NRRL 1970) (Soil fungus).